Here is a 349-residue protein sequence, read N- to C-terminus: Glycerol-3-phosphate dehydrogenase [NAD(+)], cytoplasmic (349 aa).

Residues G10 to G15, F41, and F97 each bind NAD(+). A substrate-binding site is contributed by K120. A153 lines the NAD(+) pocket. S154 carries the phosphoserine modification. The active-site Proton acceptor is K204. R269 serves as a coordination point for NAD(+). Residue R269–N270 participates in substrate binding. K289 is subject to N6-succinyllysine. NAD(+)-binding residues include K296 and Q298. Residue Y326 is modified to Phosphotyrosine.

It belongs to the NAD-dependent glycerol-3-phosphate dehydrogenase family. As to quaternary structure, homodimer. In terms of tissue distribution, expressed in liver (at protein level).

It localises to the cytoplasm. It carries out the reaction sn-glycerol 3-phosphate + NAD(+) = dihydroxyacetone phosphate + NADH + H(+). Its activity is regulated as follows. Inhibited by zinc ions and sulfate. Functionally, has glycerol-3-phosphate dehydrogenase activity. This Homo sapiens (Human) protein is Glycerol-3-phosphate dehydrogenase [NAD(+)], cytoplasmic.